The following is a 372-amino-acid chain: MKTVVVSGASVAGTAAAYWLGRHGYSVTMVERHPGLRPGGQAIDVRGPALDVLERMGLLAAAQEHKTRIRGASFVDRDGNELFRDTESTPTGGPVNSPDIELLRDDLVELLYGATQPSVEYLFDDSISTLQDDGDSVRVTFERAAAREFDLVIGADGLHSNVRRLVFGPEEQFVKRLGTHAAIFTVPNFLELDYWQTWHYGDSTMAGVYSARNNTEARAALAFMDTELRIDYRDTEAQFAELQRRMAEDGWVRAQLLHYMRSAPDFYFDEMSQILMDRWSRGRVALVGDAGYCCSPLSGQGTSVALLGAYILAGELKAAGDDYQLGFANYHAEFHGFVERNQWLVSDNIPGGAPIPQEEFERIVHSITIKDY.

This is an uncharacterized protein from Mycobacterium tuberculosis (strain CDC 1551 / Oshkosh).